The sequence spans 262 residues: 5'-nucleotidase SurE (262 aa).

D9, D10, S40, and N95 together coordinate a divalent metal cation.

It belongs to the SurE nucleotidase family. The cofactor is a divalent metal cation.

It is found in the cytoplasm. The enzyme catalyses a ribonucleoside 5'-phosphate + H2O = a ribonucleoside + phosphate. Its function is as follows. Nucleotidase that shows phosphatase activity on nucleoside 5'-monophosphates. The sequence is that of 5'-nucleotidase SurE from Aliarcobacter butzleri (strain RM4018) (Arcobacter butzleri).